Here is a 255-residue protein sequence, read N- to C-terminus: Protein BEAN1 (255 aa).

A helical transmembrane segment spans residues 37–57 (VLVASAVIGVVITLSCITIIV). A compositionally biased stretch (basic residues) spans 69–90 (QRHHHRHRRHHHHHRHRRRRHR). Disordered regions lie at residues 69–109 (QRHH…MPYA) and 160–255 (DAPP…ERIV). Positions 193–206 (QRTQGQSRLHTVSM) are enriched in polar residues. Residues 217-226 (GTGSPSDLLP) are compositionally biased toward low complexity. A compositionally biased stretch (polar residues) spans 234-243 (PSNSQGSPIP). Residues 244–255 (TQAPMPSPERIV) are compositionally biased toward pro residues.

In terms of assembly, interacts with NEDD4.

The protein localises to the membrane. This is Protein BEAN1 (Bean1) from Mus musculus (Mouse).